The following is a 161-amino-acid chain: Sec-independent protein translocase protein TatB (161 aa).

Residues 2–22 form a helical membrane-spanning segment; it reads FNDIGALELVTLVVLAVLVFG. Residues 102–161 are disordered; it reads DAVHGRDAESSSSGSSSGSSSAASGNGRVDMSKKPEKPEKPGKTDKPAADDRPPFDMDAT. Positions 111-126 are enriched in low complexity; sequence SSSSGSSSGSSSAASG. Over residues 131–161 the composition is skewed to basic and acidic residues; sequence DMSKKPEKPEKPGKTDKPAADDRPPFDMDAT.

It belongs to the TatB family. As to quaternary structure, the Tat system comprises two distinct complexes: a TatABC complex, containing multiple copies of TatA, TatB and TatC subunits, and a separate TatA complex, containing only TatA subunits. Substrates initially bind to the TatABC complex, which probably triggers association of the separate TatA complex to form the active translocon.

Its subcellular location is the cell membrane. Part of the twin-arginine translocation (Tat) system that transports large folded proteins containing a characteristic twin-arginine motif in their signal peptide across membranes. Together with TatC, TatB is part of a receptor directly interacting with Tat signal peptides. TatB may form an oligomeric binding site that transiently accommodates folded Tat precursor proteins before their translocation. This Streptomyces coelicolor (strain ATCC BAA-471 / A3(2) / M145) protein is Sec-independent protein translocase protein TatB.